The chain runs to 432 residues: Glutamate-1-semialdehyde 2,1-aminomutase (432 aa).

K271 bears the N6-(pyridoxal phosphate)lysine mark.

The protein belongs to the class-III pyridoxal-phosphate-dependent aminotransferase family. HemL subfamily. As to quaternary structure, homodimer. It depends on pyridoxal 5'-phosphate as a cofactor.

It is found in the cytoplasm. It catalyses the reaction (S)-4-amino-5-oxopentanoate = 5-aminolevulinate. The protein operates within porphyrin-containing compound metabolism; protoporphyrin-IX biosynthesis; 5-aminolevulinate from L-glutamyl-tRNA(Glu): step 2/2. It functions in the pathway porphyrin-containing compound metabolism; chlorophyll biosynthesis. This chain is Glutamate-1-semialdehyde 2,1-aminomutase, found in Prochlorococcus marinus (strain MIT 9211).